The chain runs to 181 residues: Crossover junction endodeoxyribonuclease RuvC (181 aa).

Active-site residues include aspartate 7, glutamate 67, and aspartate 139. 3 residues coordinate Mg(2+): aspartate 7, glutamate 67, and aspartate 139.

The protein belongs to the RuvC family. As to quaternary structure, homodimer which binds Holliday junction (HJ) DNA. The HJ becomes 2-fold symmetrical on binding to RuvC with unstacked arms; it has a different conformation from HJ DNA in complex with RuvA. In the full resolvosome a probable DNA-RuvA(4)-RuvB(12)-RuvC(2) complex forms which resolves the HJ. Requires Mg(2+) as cofactor.

Its subcellular location is the cytoplasm. It carries out the reaction Endonucleolytic cleavage at a junction such as a reciprocal single-stranded crossover between two homologous DNA duplexes (Holliday junction).. Its function is as follows. The RuvA-RuvB-RuvC complex processes Holliday junction (HJ) DNA during genetic recombination and DNA repair. Endonuclease that resolves HJ intermediates. Cleaves cruciform DNA by making single-stranded nicks across the HJ at symmetrical positions within the homologous arms, yielding a 5'-phosphate and a 3'-hydroxyl group; requires a central core of homology in the junction. The consensus cleavage sequence is 5'-(A/T)TT(C/G)-3'. Cleavage occurs on the 3'-side of the TT dinucleotide at the point of strand exchange. HJ branch migration catalyzed by RuvA-RuvB allows RuvC to scan DNA until it finds its consensus sequence, where it cleaves and resolves the cruciform DNA. This Ralstonia pickettii (strain 12J) protein is Crossover junction endodeoxyribonuclease RuvC.